Reading from the N-terminus, the 337-residue chain is Primase homolog protein (337 aa).

In terms of domain architecture, Toprim spans 205–304; the sequence is SEIIIVEGEP…WLVKWPKKSE (100 aa). E211, D273, and D275 together coordinate Mg(2+).

Mg(2+) is required as a cofactor.

May act as a DNA primase. The polypeptide is Primase homolog protein (Arabidopsis thaliana (Mouse-ear cress)).